A 151-amino-acid chain; its full sequence is Transcriptional repressor NrdR (151 aa).

A zinc finger lies at 3–34; the sequence is CPFCGYSESKVVDSRSTEDNMAIRRRRECLEC. An ATP-cone domain is found at 49-139; sequence ILVIKKDSSR…VYRQFKDINT (91 aa).

This sequence belongs to the NrdR family. Zn(2+) serves as cofactor.

Functionally, negatively regulates transcription of bacterial ribonucleotide reductase nrd genes and operons by binding to NrdR-boxes. The chain is Transcriptional repressor NrdR from Clostridium acetobutylicum (strain ATCC 824 / DSM 792 / JCM 1419 / IAM 19013 / LMG 5710 / NBRC 13948 / NRRL B-527 / VKM B-1787 / 2291 / W).